A 571-amino-acid polypeptide reads, in one-letter code: RUN and FYVE domain-containing protein 4 (571 aa).

Positions 33–166 constitute an RUN domain; that stretch reads TDTSAELHRL…VAFELDLQQP (134 aa). Positions 174 to 207 are disordered; sequence MFSESRCSSSTQTQGRRPRKNKDAPKKIPAAYGG. Residues 178-188 are compositionally biased toward polar residues; it reads SRCSSSTQTQG. Residues 408–481 adopt a coiled-coil conformation; the sequence is EVSLQDEIKS…ERRDAMYQEE (74 aa). The FYVE-type zinc-finger motif lies at 474 to 567; it reads RDAMYQEELG…CCPPCAQGRE (94 aa). Cys-521, Cys-524, Cys-537, Cys-540, Cys-545, Cys-548, Cys-559, and Cys-562 together coordinate Zn(2+).

Forms homodimers (via coiled coil domain). Interacts with RAB7A. Forms a ternary complex with RAB7A and LAMP2; the interaction with RAB7A is mediated by RUFY4 (via RUN and coiled coil domains). Interacts with GTP-, but not GDP-bound ARL8A and ARL8B. Interacts with dynactin/DCTN1 and the dynein intermediate chain DYNC1I1/2.

Its subcellular location is the cytoplasmic vesicle. The protein localises to the autophagosome. The protein resides in the lysosome. ARL8 effector that promotes the coupling of endolysosomes to dynein-dynactin for retrograde transport along microtubules. Acts by binding both GTP-bound ARL8 and dynein-dynactin. In nonneuronal cells, promotes concentration of endolysosomes in the juxtanuclear area. In hippocampal neurons, drives retrograde transport of endolysosomes from the axon to the soma. Positive regulator of macroautophagy in dendritic cells. Increases autophagic flux, probably by stimulating both autophagosome formation and facilitating tethering with lysosomes. Binds to phosphatidylinositol 3-phosphate (PtdIns3P) through its FYVE-type zinc finger. Positive regulator of osteosclast bone-resorbing activity, possibly by promoting late endosome-lysosome fusion by acting as an adapter protein between RAB7A on late endosomes and LAMP2 on primary lysosomes. The protein is RUN and FYVE domain-containing protein 4 (RUFY4) of Homo sapiens (Human).